Reading from the N-terminus, the 946-residue chain is Protein translocase subunit SecA (946 aa).

ATP is bound by residues Gln87, 105-109 (GEGKT), and Asp524. The disordered stretch occupies residues 904–933 (PAQTTDKADRDPNKPETWGKVGRNEDCPCG). Positions 930, 932, 941, and 942 each coordinate Zn(2+).

Belongs to the SecA family. As to quaternary structure, monomer and homodimer. Part of the essential Sec protein translocation apparatus which comprises SecA, SecYEG and auxiliary proteins SecDF-YajC and YidC. Zn(2+) serves as cofactor.

The protein resides in the cell inner membrane. It localises to the cytoplasm. It carries out the reaction ATP + H2O + cellular proteinSide 1 = ADP + phosphate + cellular proteinSide 2.. Its function is as follows. Part of the Sec protein translocase complex. Interacts with the SecYEG preprotein conducting channel. Has a central role in coupling the hydrolysis of ATP to the transfer of proteins into and across the cell membrane, serving both as a receptor for the preprotein-SecB complex and as an ATP-driven molecular motor driving the stepwise translocation of polypeptide chains across the membrane. This chain is Protein translocase subunit SecA, found in Rhodopseudomonas palustris (strain TIE-1).